Reading from the N-terminus, the 341-residue chain is HTH-type transcriptional repressor PurR (341 aa).

One can recognise an HTH lacI-type domain in the interval 2 to 56; that stretch reads ATIKDVAKRANVSTTTVSHVINKTRFVAEETRNAVWAAIKELHYSPSAVARSLKV. A DNA-binding region (H-T-H motif) is located at residues 4–23; that stretch reads IKDVAKRANVSTTTVSHVIN. The DNA-binding element occupies 48 to 56; it reads SAVARSLKV. Positions 73, 190, 192, 221, and 275 each coordinate hypoxanthine.

Homodimer.

Its pathway is purine metabolism; purine nucleotide biosynthesis [regulation]. Functionally, is the main repressor of the genes involved in the de novo synthesis of purine nucleotides, regulating purB, purC, purEK, purF, purHD, purL, purMN and guaBA expression. PurR is allosterically activated to bind its cognate DNA by binding the purine corepressors, hypoxanthine or guanine, thereby effecting transcription repression. The polypeptide is HTH-type transcriptional repressor PurR (Klebsiella pneumoniae (strain 342)).